A 256-amino-acid chain; its full sequence is Phosphatidylglycerol--prolipoprotein diacylglyceryl transferase 2 (256 aa).

Helical transmembrane passes span 11–31 (LKIYSYGFMIGLGIICATLLF), 46–66 (FNATILTVISGILGGKILYII), and 83–103 (FGNGFVIYGAIIGGALGIALC). Position 130 (Arg-130) interacts with a 1,2-diacyl-sn-glycero-3-phospho-(1'-sn-glycerol). Transmembrane regions (helical) follow at residues 142–162 (AETTSSIGIIFPADSLAPAGV), 164–184 (LYPTQIFSSIFDFALGLFLLW), and 221–241 (VGLLSTSQFISIFILIGGILL).

This sequence belongs to the Lgt family.

It localises to the cell membrane. The enzyme catalyses L-cysteinyl-[prolipoprotein] + a 1,2-diacyl-sn-glycero-3-phospho-(1'-sn-glycerol) = an S-1,2-diacyl-sn-glyceryl-L-cysteinyl-[prolipoprotein] + sn-glycerol 1-phosphate + H(+). The protein operates within protein modification; lipoprotein biosynthesis (diacylglyceryl transfer). Catalyzes the transfer of the diacylglyceryl group from phosphatidylglycerol to the sulfhydryl group of the N-terminal cysteine of a prolipoprotein, the first step in the formation of mature lipoproteins. In Clostridium perfringens (strain 13 / Type A), this protein is Phosphatidylglycerol--prolipoprotein diacylglyceryl transferase 2.